Reading from the N-terminus, the 433-residue chain is ATP-dependent protease ATPase subunit HslU (433 aa).

Residues V18, 60 to 65 (GVGKTE), D246, E311, and R383 each bind ATP.

The protein belongs to the ClpX chaperone family. HslU subfamily. A double ring-shaped homohexamer of HslV is capped on each side by a ring-shaped HslU homohexamer. The assembly of the HslU/HslV complex is dependent on binding of ATP.

It is found in the cytoplasm. ATPase subunit of a proteasome-like degradation complex; this subunit has chaperone activity. The binding of ATP and its subsequent hydrolysis by HslU are essential for unfolding of protein substrates subsequently hydrolyzed by HslV. HslU recognizes the N-terminal part of its protein substrates and unfolds these before they are guided to HslV for hydrolysis. In Rhodopseudomonas palustris (strain BisA53), this protein is ATP-dependent protease ATPase subunit HslU.